Consider the following 174-residue polypeptide: Superoxide dismutase [Cu-Zn] (174 aa).

Residues 1 to 20 (MMKSLFIASTMVLMAFPAFA) form the signal peptide. Residues His68, His70, and His93 each coordinate Cu cation. A disulfide bridge connects residues Cys75 and Cys170. His93, His102, His110, and Asp113 together coordinate Zn(2+). His148 serves as a coordination point for Cu cation.

It belongs to the Cu-Zn superoxide dismutase family. As to quaternary structure, homodimer. Cu cation is required as a cofactor. Requires Zn(2+) as cofactor.

The protein localises to the periplasm. The enzyme catalyses 2 superoxide + 2 H(+) = H2O2 + O2. Functionally, destroys radicals which are normally produced within the cells and which are toxic to biological systems. This is Superoxide dismutase [Cu-Zn] (sodC) from Brucella melitensis biotype 1 (strain ATCC 23456 / CCUG 17765 / NCTC 10094 / 16M).